The sequence spans 261 residues: (S)-ureidoglycine aminohydrolase (261 aa).

In terms of domain architecture, Cupin type-2 spans 184–230 (LSFAPGASHGYIETHVQEHGAYILSGQGVYNLDNNWIPVKKGDYIFM). The Mn(2+) site is built by glutamate 196, histidine 198, histidine 202, and glutamine 236. Position 196 (glutamate 196) interacts with substrate. Substrate-binding residues include glutamine 236, tyrosine 249, and lysine 253.

The protein belongs to the UGHY family. In terms of assembly, monomer. Mn(2+) serves as cofactor.

Its subcellular location is the cytoplasm. The catalysed reaction is (S)-2-ureidoglycine + H2O = (S)-ureidoglycolate + NH4(+). In terms of biological role, involved in the anaerobic nitrogen utilization via the assimilation of allantoin. Catalyzes the second stereospecific hydrolysis reaction (deamination) of the allantoin degradation pathway, producing S-ureidoglycolate and ammonia from S-ureidoglycine. The sequence is that of (S)-ureidoglycine aminohydrolase (allE) from Escherichia coli (strain K12).